A 385-amino-acid chain; its full sequence is Cytochrome b (385 aa).

The Mitochondrial matrix segment spans residues 1–27 (MRLLKSHPLLKLVNSYLIDASQPSNIS). Tyr16 serves as a coordination point for a ubiquinone. The chain crosses the membrane as a helical span at residues 28–51 (YLWNFGSLLACCLIIQIVTGVTLA). The Mitochondrial intermembrane portion of the chain corresponds to 52–74 (MHYSPNVLEAFNSIEHIMRDVNN). A helical membrane pass occupies residues 75–102 (GWLVRYLHSNTASAFFFLVYLHIGRGMY). 2 residues coordinate heme b: His82 and His96. Over 103-110 (YGSYRAPR) the chain is Mitochondrial matrix. Residues 111 to 135 (TLVWAIGTVILILMMATAFLGYVLP) form a helical membrane-spanning segment. The Mitochondrial intermembrane portion of the chain corresponds to 136-172 (YGQMSLWGATVITNLISAIPWIGQDIVEFIWGGFSVN). The chain crosses the membrane as a helical span at residues 173-205 (NATLNRFFALHFVLPFILAALVLMHLIALHDTA). The heme b site is built by His183 and His197. His202 serves as a coordination point for a ubiquinone. Topologically, residues 206-224 (GSSNPLGVSGNYDRITFAP) are mitochondrial matrix. The chain crosses the membrane as a helical span at residues 225–247 (YYLFKDLITIFIFIYVLSSFVFF). Topologically, residues 248 to 288 (MPNVLGDSENYIMANPMQTPPAIVPEWYLLPFYAILRSIPN) are mitochondrial intermembrane. Residues 289 to 309 (KLLGVIAMFSAILAIMLLPIT) form a helical membrane-spanning segment. Topologically, residues 310-320 (DLGRSKGLQFR) are mitochondrial matrix. A helical transmembrane segment spans residues 321–341 (PLSKFAFWAFVVNFLILMKLG). Over 342–348 (ACHVESP) the chain is Mitochondrial intermembrane. A helical membrane pass occupies residues 349 to 365 (FIELGQFSTIFYFSYFI). The Mitochondrial matrix segment spans residues 366-385 (FIVPVLSLIENTLVDLNYLK).

It belongs to the cytochrome b family. Component of the ubiquinol-cytochrome c oxidoreductase (cytochrome b-c1 complex, complex III, CIII), a multisubunit enzyme composed of 10 subunits. The complex is composed of 3 respiratory subunits cytochrome b (cob), cytochrome c1 (cyt-1) and Rieske protein (fes-1), 2 core protein subunits pep and ucr-1, and 5 low-molecular weight protein subunits qcr6, qcr7, qcr8, qcr9 and probably NCU16844/qcr10. The complex exists as an obligatory dimer and forms supercomplexes (SCs) in the inner mitochondrial membrane with NADH-ubiquinone oxidoreductase (complex I, CI) and cytochrome c oxidase (complex IV, CIV), resulting in different assemblies (supercomplexes SCI(1)III(2), SCIII(2)IV(1) and SCIII(2)IV(2) as well as higher order I(x)III(y)IV(z) megacomplexes). The cofactor is heme b.

Its subcellular location is the mitochondrion inner membrane. It carries out the reaction a quinol + 2 Fe(III)-[cytochrome c](out) = a quinone + 2 Fe(II)-[cytochrome c](out) + 2 H(+)(out). Component of the ubiquinol-cytochrome c oxidoreductase, a multisubunit transmembrane complex that is part of the mitochondrial electron transport chain which drives oxidative phosphorylation. The respiratory chain contains 3 multisubunit complexes succinate dehydrogenase (complex II, CII), ubiquinol-cytochrome c oxidoreductase (cytochrome b-c1 complex, complex III, CIII) and cytochrome c oxidase (complex IV, CIV), that cooperate to transfer electrons derived from NADH and succinate to molecular oxygen, creating an electrochemical gradient over the inner membrane that drives transmembrane transport and the ATP synthase. The cytochrome b-c1 complex catalyzes electron transfer from ubiquinol to cytochrome c, linking this redox reaction to translocation of protons across the mitochondrial inner membrane, with protons being carried across the membrane as hydrogens on the quinol. In the process called Q cycle, 2 protons are consumed from the matrix, 4 protons are released into the intermembrane space and 2 electrons are passed to cytochrome c. Cytochrome b is a catalytic core subunit containing 2 b-type hemes BL and BH topographically segregated in the quinone reduction (Qi) and quinol oxidation (Q0) sites on opposite sides of the membrane. In Neurospora crassa (strain ATCC 24698 / 74-OR23-1A / CBS 708.71 / DSM 1257 / FGSC 987), this protein is Cytochrome b (cob).